The chain runs to 300 residues: MQTDLSDSSFFNHQSVMTDEIMASLEHYPLIHNNQLKGIDATLGGGGHSYHLLRKYSDLNIIGLDQDPFARKSASKKLDEFKNRIDIRASNFADFVPKEKVSFVIADLGVNSNQIDDPKRGFSFQKDGPLDMRMNPFLDVDADKLIEALNEKDLANLIYKYGEERLSRKIARKIKLDLKENGKYSGTKELAYSIAGCFPPKQRYKKIHPATRTFQALRIAVNKEIEVLEKFLQVVPEWLLPGGIISIISFHSLEDRLVKSCFKNDQRLKNLTKKPITPSEQEIELNKRARSGKLRIAQLN.

Residues 46-48, aspartate 65, phenylalanine 92, aspartate 107, and glutamine 114 each bind S-adenosyl-L-methionine; that span reads GGH.

Belongs to the methyltransferase superfamily. RsmH family.

The protein resides in the cytoplasm. The enzyme catalyses cytidine(1402) in 16S rRNA + S-adenosyl-L-methionine = N(4)-methylcytidine(1402) in 16S rRNA + S-adenosyl-L-homocysteine + H(+). Specifically methylates the N4 position of cytidine in position 1402 (C1402) of 16S rRNA. This is Ribosomal RNA small subunit methyltransferase H from Prochlorococcus marinus (strain AS9601).